We begin with the raw amino-acid sequence, 397 residues long: Mannonate dehydratase (397 aa).

It belongs to the mannonate dehydratase family. Requires Fe(2+) as cofactor. It depends on Mn(2+) as a cofactor.

The catalysed reaction is D-mannonate = 2-dehydro-3-deoxy-D-gluconate + H2O. It participates in carbohydrate metabolism; pentose and glucuronate interconversion. In terms of biological role, catalyzes the dehydration of D-mannonate. This is Mannonate dehydratase from Saccharophagus degradans (strain 2-40 / ATCC 43961 / DSM 17024).